Here is a 181-residue protein sequence, read N- to C-terminus: MKQSLEDTLLAAIRTIPDYPRPGILFRDITTLLGDARAFRRAVDELVHPYAGAKIDKIAGIEARGFILGGAIAHQLSSGFIPIRKKGKLPHETVRVAYSLEYGLDEMEMHIDAVSPGEKVILVDDLIATGGTAEAAVRLLRQMGAEIVAACFVIDLPDLGGRAKLEAEGVDVRTLVSFEGH.

It belongs to the purine/pyrimidine phosphoribosyltransferase family. Homodimer.

The protein localises to the cytoplasm. The enzyme catalyses AMP + diphosphate = 5-phospho-alpha-D-ribose 1-diphosphate + adenine. It functions in the pathway purine metabolism; AMP biosynthesis via salvage pathway; AMP from adenine: step 1/1. Functionally, catalyzes a salvage reaction resulting in the formation of AMP, that is energically less costly than de novo synthesis. This is Adenine phosphoribosyltransferase from Chelativorans sp. (strain BNC1).